The primary structure comprises 454 residues: Bifunctional protein GlmU (454 aa).

The interval 1–232 (MTDRTCLSIV…VDNVIGINNR (232 aa)) is pyrophosphorylase. UDP-N-acetyl-alpha-D-glucosamine contacts are provided by residues 11 to 14 (LAAG), Lys-25, Gln-78, and 83 to 84 (GT). Asp-108 contacts Mg(2+). The UDP-N-acetyl-alpha-D-glucosamine site is built by Gly-144, Glu-158, Asn-173, and Asn-230. Asn-230 is a Mg(2+) binding site. The linker stretch occupies residues 233–253 (AELAEAETIWQNRKRRELMLS). The segment at 254–454 (GVTLIAPETV…AIKAAKSVSK (201 aa)) is N-acetyltransferase. The UDP-N-acetyl-alpha-D-glucosamine site is built by Arg-319 and Lys-337. The active-site Proton acceptor is His-349. 2 residues coordinate UDP-N-acetyl-alpha-D-glucosamine: Tyr-352 and Asn-363. Acetyl-CoA contacts are provided by residues Ala-366, 372–373 (NY), Ser-391, Ser-409, and Arg-426.

It in the N-terminal section; belongs to the N-acetylglucosamine-1-phosphate uridyltransferase family. This sequence in the C-terminal section; belongs to the transferase hexapeptide repeat family. Homotrimer. Mg(2+) serves as cofactor.

It localises to the cytoplasm. The catalysed reaction is alpha-D-glucosamine 1-phosphate + acetyl-CoA = N-acetyl-alpha-D-glucosamine 1-phosphate + CoA + H(+). It catalyses the reaction N-acetyl-alpha-D-glucosamine 1-phosphate + UTP + H(+) = UDP-N-acetyl-alpha-D-glucosamine + diphosphate. It participates in nucleotide-sugar biosynthesis; UDP-N-acetyl-alpha-D-glucosamine biosynthesis; N-acetyl-alpha-D-glucosamine 1-phosphate from alpha-D-glucosamine 6-phosphate (route II): step 2/2. Its pathway is nucleotide-sugar biosynthesis; UDP-N-acetyl-alpha-D-glucosamine biosynthesis; UDP-N-acetyl-alpha-D-glucosamine from N-acetyl-alpha-D-glucosamine 1-phosphate: step 1/1. The protein operates within bacterial outer membrane biogenesis; LPS lipid A biosynthesis. Its function is as follows. Catalyzes the last two sequential reactions in the de novo biosynthetic pathway for UDP-N-acetylglucosamine (UDP-GlcNAc). The C-terminal domain catalyzes the transfer of acetyl group from acetyl coenzyme A to glucosamine-1-phosphate (GlcN-1-P) to produce N-acetylglucosamine-1-phosphate (GlcNAc-1-P), which is converted into UDP-GlcNAc by the transfer of uridine 5-monophosphate (from uridine 5-triphosphate), a reaction catalyzed by the N-terminal domain. The chain is Bifunctional protein GlmU from Brucella abortus (strain S19).